We begin with the raw amino-acid sequence, 397 residues long: Decapping and exoribonuclease protein (397 aa).

A compositionally biased stretch (basic residues) spans 1 to 10 (MEPRGTKRKA). Residues 1-30 (MEPRGTKRKAEKTEVEKPLNKLPRAVPSLR) form a disordered region. Substrate contacts are provided by residues Arg-58, Glu-101, and 131-133 (WRG). Met-185 lines the adenosine 3',5'-bisphosphate pocket. Residue Glu-192 participates in Mg(2+) binding. 2 residues coordinate substrate: Cys-217 and Glu-234. Glu-234, Asp-236, Glu-253, and Leu-254 together coordinate Mg(2+). Residue Asp-236 participates in adenosine 3',5'-bisphosphate binding. Positions 253–256 (ELKT) are adenosine 3',5'-bisphosphate; inhibitor. Positions 255 and 280 each coordinate substrate. Gln-280 contacts adenosine 3',5'-bisphosphate. Thr-392 bears the Phosphothreonine mark. Ser-394 bears the Phosphoserine mark.

This sequence belongs to the DXO/Dom3Z family. Mg(2+) is required as a cofactor.

The protein resides in the nucleus. It catalyses the reaction a 5'-end triphospho-ribonucleoside in mRNA + H2O = a 5'-end phospho-ribonucleoside in mRNA + diphosphate + H(+). The catalysed reaction is a 5'-end NAD(+)-phospho-ribonucleoside in mRNA + H2O = a 5'-end phospho-ribonucleoside in mRNA + NAD(+) + H(+). The enzyme catalyses a 5'-end NAD(+)-phospho-ribonucleoside in snoRNA + H2O = a 5'-end phospho-ribonucleoside in snoRNA + NAD(+) + H(+). It carries out the reaction a 5'-end (N(7)-methyl 5'-triphosphoguanosine)-ribonucleoside-ribonucleotide in mRNA + H2O = a (N(7)-methyl 5'-triphosphoguanosine)-nucleoside + a 5'-end phospho-ribonucleoside in mRNA + H(+). It catalyses the reaction a 5'-end FAD-phospho-ribonucleoside in mRNA + H2O = a 5'-end phospho-ribonucleoside in mRNA + FAD + H(+). The catalysed reaction is a 5'-end CoA-ribonucleoside in mRNA + H2O = 3'-dephospho-CoA + a 5'-end phospho-ribonucleoside in mRNA + H(+). Its activity is regulated as follows. The 5'-3' exoribonuclease activity is inhibited by adenosine 3',5'-bisphosphate. Its function is as follows. Decapping enzyme for NAD-capped RNAs: specifically hydrolyzes the nicotinamide adenine dinucleotide (NAD) cap from a subset of RNAs by removing the entire NAD moiety from the 5'-end of an NAD-capped RNA. The NAD-cap is present at the 5'-end of some RNAs and snoRNAs. In contrast to the canonical 5'-end N7 methylguanosine (m7G) cap, the NAD cap promotes mRNA decay. Preferentially acts on NAD-capped transcripts in response to environmental stress. Also acts as a non-canonical decapping enzyme that removes the entire cap structure of m7G capped or incompletely capped RNAs and mediates their subsequent degradation. Specifically degrades pre-mRNAs with a defective 5'-end m7G cap and is part of a pre-mRNA capping quality control. Has decapping activity toward incomplete 5'-end m7G cap mRNAs such as unmethylated 5'-end-capped RNA (cap0), while it has no activity toward 2'-O-ribose methylated m7G cap (cap1). In contrast to canonical decapping enzymes DCP2 and NUDT16, which cleave the cap within the triphosphate linkage, the decapping activity releases the entire cap structure GpppN and a 5'-end monophosphate RNA. Also has 5'-3' exoribonuclease activities: The 5'-end monophosphate RNA is then degraded by the 5'-3' exoribonuclease activity, enabling this enzyme to decap and degrade incompletely capped mRNAs. Also possesses RNA 5'-pyrophosphohydrolase activity by hydrolyzing the 5'-end triphosphate to release pyrophosphates. Exhibits decapping activity towards FAD-capped RNAs. Exhibits decapping activity towards dpCoA-capped RNAs in vitro. The chain is Decapping and exoribonuclease protein from Mus musculus (Mouse).